Consider the following 316-residue polypeptide: Retinol dehydrogenase 11 (316 aa).

The helical; Signal-anchor for type II membrane protein transmembrane segment at 1 to 21 threads the bilayer; sequence MFGFLLLLSLPFILYLVTPKI. Topologically, residues 22 to 316 are cytoplasmic; that stretch reads RKMLSSGVCT…CDLLGLPVDW (295 aa). 45–51 lines the NADP(+) pocket; the sequence is GANTGIG. Lys109 is modified (N6-acetyllysine). Ser174 lines the substrate pocket. The Proton acceptor role is filled by Tyr199.

The protein belongs to the short-chain dehydrogenases/reductases (SDR) family. Post-translationally, not glycosylated. Expressed at high level in liver and testis. Expressed at lower levels in smooth muscle, thymus, submaxillary gland and epididymis. In testis, expression is restricted to pachytene spermatocytes. Also expressed in four layers of the retina, including the outer segment of rods and cones.

It is found in the endoplasmic reticulum membrane. It carries out the reaction all-trans-retinol + NADP(+) = all-trans-retinal + NADPH + H(+). The catalysed reaction is 11-cis-retinol + NADP(+) = 11-cis-retinal + NADPH + H(+). The enzyme catalyses 9-cis-retinol + NADP(+) = 9-cis-retinal + NADPH + H(+). It catalyses the reaction 13-cis-retinol + NADP(+) = 13-cis-retinal + NADPH + H(+). It carries out the reaction a medium-chain primary fatty alcohol + NADP(+) = a medium-chain fatty aldehyde + NADPH + H(+). The catalysed reaction is (2E,6Z)-nona-2,6-dien-1-ol + NADP(+) = (2E,6Z)-nona-2,6-dienal + NADPH + H(+). The enzyme catalyses (E)-oct-2-en-1-ol + NADP(+) = (2E)-octenal + NADPH + H(+). It catalyses the reaction (E)-non-2-en-1-ol + NADP(+) = (E)-non-2-enal + NADPH + H(+). It carries out the reaction heptan-1-ol + NADP(+) = heptanal + NADPH + H(+). The catalysed reaction is hexan-1-ol + NADP(+) = hexanal + NADPH + H(+). The enzyme catalyses decan-1-ol + NADP(+) = decanal + NADPH + H(+). It catalyses the reaction nonan-1-ol + NADP(+) = nonanal + NADPH + H(+). It carries out the reaction octan-1-ol + NADP(+) = octanal + NADPH + H(+). The catalysed reaction is (Z)-non-6-en-1-ol + NADP(+) = (Z)-non-6-enal + NADPH + H(+). It participates in cofactor metabolism; retinol metabolism. Retinol dehydrogenase with a clear preference for NADP. Displays high activity towards 9-cis, 11-cis and all-trans-retinol, and to a lesser extent on 13-cis-retinol. Also exhibits reductive activity towards toxic lipid peroxidation products such as medium-chain aldehydes trans-2-nonenal, nonanal, and cis-6-nonenal. Has no dehydrogenase activity towards steroid. Seems to be required for homeostasis of retinol in liver and testis. The polypeptide is Retinol dehydrogenase 11 (Rdh11) (Mus musculus (Mouse)).